Consider the following 201-residue polypeptide: Proteasome subunit beta 1 (201 aa).

Residue Met-1 is a propeptide, removed in mature form; by autocatalysis. The active-site Nucleophile is Thr-2.

Belongs to the peptidase T1B family. As to quaternary structure, the 20S proteasome core is composed of 14 alpha and 14 beta subunits that assemble into four stacked heptameric rings, resulting in a barrel-shaped structure. The two inner rings, each composed of seven catalytic beta subunits, are sandwiched by two outer rings, each composed of seven alpha subunits. The catalytic chamber with the active sites is on the inside of the barrel. Has a gated structure, the ends of the cylinder being occluded by the N-termini of the alpha-subunits. Is capped at one or both ends by the proteasome regulatory ATPase, PAN.

It localises to the cytoplasm. The catalysed reaction is Cleavage of peptide bonds with very broad specificity.. With respect to regulation, the formation of the proteasomal ATPase PAN-20S proteasome complex, via the docking of the C-termini of PAN into the intersubunit pockets in the alpha-rings, triggers opening of the gate for substrate entry. Interconversion between the open-gate and close-gate conformations leads to a dynamic regulation of the 20S proteasome proteolysis activity. Its function is as follows. Component of the proteasome core, a large protease complex with broad specificity involved in protein degradation. The polypeptide is Proteasome subunit beta 1 (Pyrobaculum calidifontis (strain DSM 21063 / JCM 11548 / VA1)).